We begin with the raw amino-acid sequence, 75 residues long: Sec-independent protein translocase protein TatA (75 aa).

A helical transmembrane segment spans residues methionine 1 to glycine 21. 2 stretches are compositionally biased toward basic and acidic residues: residues methionine 43–glutamine 54 and alanine 66–histidine 75. The interval methionine 43–histidine 75 is disordered.

This sequence belongs to the TatA/E family. In terms of assembly, the Tat system comprises two distinct complexes: a TatABC complex, containing multiple copies of TatA, TatB and TatC subunits, and a separate TatA complex, containing only TatA subunits. Substrates initially bind to the TatABC complex, which probably triggers association of the separate TatA complex to form the active translocon.

Its subcellular location is the cell inner membrane. In terms of biological role, part of the twin-arginine translocation (Tat) system that transports large folded proteins containing a characteristic twin-arginine motif in their signal peptide across membranes. TatA could form the protein-conducting channel of the Tat system. The chain is Sec-independent protein translocase protein TatA from Aromatoleum aromaticum (strain DSM 19018 / LMG 30748 / EbN1) (Azoarcus sp. (strain EbN1)).